We begin with the raw amino-acid sequence, 133 residues long: ATP synthase epsilon chain (133 aa).

Belongs to the ATPase epsilon chain family. F-type ATPases have 2 components, CF(1) - the catalytic core - and CF(0) - the membrane proton channel. CF(1) has five subunits: alpha(3), beta(3), gamma(1), delta(1), epsilon(1). CF(0) has three main subunits: a, b and c.

The protein localises to the cell membrane. In terms of biological role, produces ATP from ADP in the presence of a proton gradient across the membrane. This Clostridium perfringens (strain SM101 / Type A) protein is ATP synthase epsilon chain.